Here is a 207-residue protein sequence, read N- to C-terminus: Small ribosomal subunit protein uS4 (207 aa).

The segment at 31-55 (KCKLDSKPGQHGRTSGARTSDYGTQ) is disordered. Over residues 42 to 53 (GRTSGARTSDYG) the composition is skewed to polar residues. The S4 RNA-binding domain occupies 97–160 (SRLDNVVYRM…KKQARIVEAL (64 aa)).

Belongs to the universal ribosomal protein uS4 family. In terms of assembly, part of the 30S ribosomal subunit. Contacts protein S5. The interaction surface between S4 and S5 is involved in control of translational fidelity.

Functionally, one of the primary rRNA binding proteins, it binds directly to 16S rRNA where it nucleates assembly of the body of the 30S subunit. Its function is as follows. With S5 and S12 plays an important role in translational accuracy. In Burkholderia ambifaria (strain MC40-6), this protein is Small ribosomal subunit protein uS4.